The sequence spans 232 residues: Chromosome partition protein MukE (232 aa).

The interval 203-232 is disordered; sequence HTKEPSQGSLLSEEDQEEQAQEEMTEEGEA. Acidic residues predominate over residues 214–232; it reads SEEDQEEQAQEEMTEEGEA.

Belongs to the MukE family. Interacts, and probably forms a ternary complex, with MukF and MukB. The complex formation is stimulated by calcium or magnesium.

The protein localises to the cytoplasm. The protein resides in the nucleoid. Functionally, involved in chromosome condensation, segregation and cell cycle progression. May participate in facilitating chromosome segregation by condensation DNA from both sides of a centrally located replisome during cell division. Probably acts via its interaction with MukB and MukF. This chain is Chromosome partition protein MukE, found in Vibrio parahaemolyticus serotype O3:K6 (strain RIMD 2210633).